Consider the following 207-residue polypeptide: Protein TEX261 homolog (207 aa).

The next 4 helical transmembrane spans lie at 2 to 22 (FLSLLILLSYALGFVFCVVCL), 54 to 74 (IIFLLGIFEDLDFTSLLFSFI), 94 to 114 (YKFILSVLSFIISHISWFIYF), and 126 to 146 (IIAIFTFCVWLIPLIFFISLA).

The protein belongs to the SVP26 family.

The protein resides in the membrane. In Dictyostelium discoideum (Social amoeba), this protein is Protein TEX261 homolog.